We begin with the raw amino-acid sequence, 365 residues long: UDP-N-acetylglucosamine--N-acetylmuramyl-(pentapeptide) pyrophosphoryl-undecaprenol N-acetylglucosamine transferase (365 aa).

Residues 12-14 (TGG), N128, R169, S195, and Q296 each bind UDP-N-acetyl-alpha-D-glucosamine.

Belongs to the glycosyltransferase 28 family. MurG subfamily.

The protein localises to the cell inner membrane. It catalyses the reaction di-trans,octa-cis-undecaprenyl diphospho-N-acetyl-alpha-D-muramoyl-L-alanyl-D-glutamyl-meso-2,6-diaminopimeloyl-D-alanyl-D-alanine + UDP-N-acetyl-alpha-D-glucosamine = di-trans,octa-cis-undecaprenyl diphospho-[N-acetyl-alpha-D-glucosaminyl-(1-&gt;4)]-N-acetyl-alpha-D-muramoyl-L-alanyl-D-glutamyl-meso-2,6-diaminopimeloyl-D-alanyl-D-alanine + UDP + H(+). It functions in the pathway cell wall biogenesis; peptidoglycan biosynthesis. Its function is as follows. Cell wall formation. Catalyzes the transfer of a GlcNAc subunit on undecaprenyl-pyrophosphoryl-MurNAc-pentapeptide (lipid intermediate I) to form undecaprenyl-pyrophosphoryl-MurNAc-(pentapeptide)GlcNAc (lipid intermediate II). In Gluconobacter oxydans (strain 621H) (Gluconobacter suboxydans), this protein is UDP-N-acetylglucosamine--N-acetylmuramyl-(pentapeptide) pyrophosphoryl-undecaprenol N-acetylglucosamine transferase.